The sequence spans 104 residues: Large ribosomal subunit protein eL30 (104 aa).

It belongs to the eukaryotic ribosomal protein eL30 family.

This Tetrahymena thermophila (strain SB210) protein is Large ribosomal subunit protein eL30 (RPL30).